The sequence spans 319 residues: Peroxidase 13 (319 aa).

The signal sequence occupies residues 1–22 (MITIALFLVLLYFHDQLGYSAA). Disulfide bonds link C33/C111, C66/C71, C117/C315, and C196/C222. H64 (proton acceptor) is an active-site residue. Residues D65, V68, G70, D72, and S74 each coordinate Ca(2+). Position 158 (P158) interacts with substrate. Heme b is bound at residue H189. T190 contributes to the Ca(2+) binding site. Residues D235, S238, and D243 each contribute to the Ca(2+) site. N280 carries an N-linked (GlcNAc...) asparagine glycan.

The protein belongs to the peroxidase family. Classical plant (class III) peroxidase subfamily. Heme b is required as a cofactor. Ca(2+) serves as cofactor.

It is found in the secreted. It catalyses the reaction 2 a phenolic donor + H2O2 = 2 a phenolic radical donor + 2 H2O. In terms of biological role, removal of H(2)O(2), oxidation of toxic reductants, biosynthesis and degradation of lignin, suberization, auxin catabolism, response to environmental stresses such as wounding, pathogen attack and oxidative stress. These functions might be dependent on each isozyme/isoform in each plant tissue. This chain is Peroxidase 13 (PER13), found in Arabidopsis thaliana (Mouse-ear cress).